A 100-amino-acid chain; its full sequence is Large ribosomal subunit protein uL23 (100 aa).

This sequence belongs to the universal ribosomal protein uL23 family. As to quaternary structure, part of the 50S ribosomal subunit. Contacts protein L29, and trigger factor when it is bound to the ribosome.

Its function is as follows. One of the early assembly proteins it binds 23S rRNA. One of the proteins that surrounds the polypeptide exit tunnel on the outside of the ribosome. Forms the main docking site for trigger factor binding to the ribosome. The sequence is that of Large ribosomal subunit protein uL23 from Pseudoalteromonas translucida (strain TAC 125).